The following is a 325-amino-acid chain: MECYEQSRQRAAFVVLLFIVMLGSQAQAQLRTDFYSDSCPSLLPTVRRVVQREVAKERRIAASLLRLFFHDCFVNGCDASILLDDTRSFLGEKTAGPNNNSVRGYEVIDAIKSRVERLCPGVVSCADILAITARDSVLLMGGRGWSVKLGRRDSITASFSTANSGVLPPPTSTLDNLINLFRANGLSPRDMVALSGAHTIGQARCVTFRSRIYNSTNIDLSFALSRRRSCPAATGSGDNNAAILDLRTPEKFDGSYFMQLVNHRGLLTSDQVLFNGGSTDSIVVSYSRSVQAFYRDFVAAMIKMGDISPLTGSNGQIRRSCRRPN.

The N-terminal stretch at 1 to 28 (MECYEQSRQRAAFVVLLFIVMLGSQAQA) is a signal peptide. Pyrrolidone carboxylic acid is present on Q29. 4 disulfide bridges follow: C39–C119, C72–C77, C125–C321, and C205–C230. H70 (proton acceptor) is an active-site residue. Ca(2+)-binding residues include D71, V74, G76, D78, and S80. An N-linked (GlcNAc...) asparagine glycan is attached at N99. P168 provides a ligand contact to substrate. H198 is a binding site for heme b. Position 199 (T199) interacts with Ca(2+). N-linked (GlcNAc...) asparagine glycosylation is present at N214. Ca(2+) contacts are provided by D245, T248, and D253.

It belongs to the peroxidase family. Classical plant (class III) peroxidase subfamily. Heme b serves as cofactor. Ca(2+) is required as a cofactor.

The protein localises to the secreted. The catalysed reaction is 2 a phenolic donor + H2O2 = 2 a phenolic radical donor + 2 H2O. Functionally, removal of H(2)O(2), oxidation of toxic reductants, biosynthesis and degradation of lignin, suberization, auxin catabolism, response to environmental stresses such as wounding, pathogen attack and oxidative stress. These functions might be dependent on each isozyme/isoform in each plant tissue. The polypeptide is Peroxidase 68 (PER68) (Arabidopsis thaliana (Mouse-ear cress)).